The following is a 43-amino-acid chain: Neurotrophic factor BDNF (43 aa).

The protein belongs to the NGF-beta family.

It localises to the secreted. Promotes the survival of neuronal populations that are all located either in the central nervous system or directly connected to it. The protein is Neurotrophic factor BDNF (bdnf) of Raja clavata (Thornback ray).